Consider the following 47-residue polypeptide: uncharacterized protein (47 aa).

A signal peptide spans 1-25; the sequence is MAHKCASAKLLSGIMALLFNGKSLL.

This is an uncharacterized protein from Saccharomyces cerevisiae (strain ATCC 204508 / S288c) (Baker's yeast).